Reading from the N-terminus, the 238-residue chain is Ribitol-5-phosphate cytidylyltransferase 2 (238 aa).

CTP contacts are provided by residues 7 to 10 and 81 to 87; these read LAGG and GTDRNET.

It belongs to the IspD/TarI cytidylyltransferase family. TarI subfamily.

The enzyme catalyses D-ribitol 5-phosphate + CTP + H(+) = CDP-L-ribitol + diphosphate. Its pathway is cell wall biogenesis; poly(ribitol phosphate) teichoic acid biosynthesis. In terms of biological role, catalyzes the transfer of the cytidylyl group of CTP to D-ribitol 5-phosphate. The chain is Ribitol-5-phosphate cytidylyltransferase 2 from Staphylococcus aureus (strain bovine RF122 / ET3-1).